Here is a 54-residue protein sequence, read N- to C-terminus: MGMSFSHLLIVLLIIFVLFGAGKLPQVMSDLAKGLKAFKDGMKDDGNDNDRKNN.

The chain crosses the membrane as a helical span at residues 1–21; the sequence is MGMSFSHLLIVLLIIFVLFGA.

The protein belongs to the TatA/E family. As to quaternary structure, the Tat system comprises two distinct complexes: a TatABC complex, containing multiple copies of TatA, TatB and TatC subunits, and a separate TatA complex, containing only TatA subunits. Substrates initially bind to the TatABC complex, which probably triggers association of the separate TatA complex to form the active translocon.

It localises to the cell inner membrane. Functionally, part of the twin-arginine translocation (Tat) system that transports large folded proteins containing a characteristic twin-arginine motif in their signal peptide across membranes. TatA could form the protein-conducting channel of the Tat system. The sequence is that of Sec-independent protein translocase protein TatA from Rickettsia canadensis (strain McKiel).